A 1347-amino-acid chain; its full sequence is Protein dispatched homolog 3 (1347 aa).

The Cytoplasmic segment spans residues 1–67; the sequence is MDSEDDPLLQ…LGWAFTNPCC (67 aa). A helical transmembrane segment spans residues 68 to 88; that stretch reads AGLVLFLGCSIPMVLSAFMFL. At 89–417 the chain is on the lumenal side; sequence YYPPLDIDIS…YEVRRTFNND (329 aa). The disordered stretch occupies residues 156-207; that stretch reads GNHSRPASRAPRSAPRDTVATQTSAANSSERRRREAPSPEGQVTNQSRARRG. Residue asparagine 157 is glycosylated (N-linked (GlcNAc...) asparagine). The span at 159–168 shows a compositional bias: low complexity; that stretch reads SRPASRAPRS. Residues 412–570 form the SSD domain; it reads RTFNNDMLLA…LFTMPAALGL (159 aa). The helical transmembrane segment at 418-438 threads the bilayer; sequence MLLAFISSSCIAALVYILTSC. Position 439 (serine 439) is a topological domain, cytoplasmic. A helical membrane pass occupies residues 440-460; sequence VFLSFFGIASIGLSCLVALFL. At 461 to 463 the chain is on the lumenal side; the sequence is YHV. A helical transmembrane segment spans residues 464-484; sequence VFGIQYLGILNGVAAFVIVGI. Residues 485–528 are Cytoplasmic-facing; that stretch reads GVDDVFVFINTYRQATHLEDPQLRMIHTIQTAGKATFFTSLTTA. Residues 529–549 form a helical membrane-spanning segment; it reads AAYAANVFSQIPAVHDFGLFM. Position 550 (serine 550) is a topological domain, lumenal. A helical membrane pass occupies residues 551–571; the sequence is LIVTCCWLAVLFTMPAALGLW. Over 572-684 the chain is Cytoplasmic; sequence SLYMAPLESS…WVLWAAVKSR (113 aa). The helical transmembrane segment at 685-705 threads the bilayer; that stretch reads WVIVGLFASILILSLVFASRL. At 706–1137 the chain is on the lumenal side; sequence RPASRAPLLF…IFMEIIGVQS (432 aa). An N-linked (GlcNAc...) asparagine glycan is attached at asparagine 976. A helical transmembrane segment spans residues 1138-1158; that stretch reads ALYGLVLSLLICVAAVAVFTT. Position 1159 (histidine 1159) is a topological domain, cytoplasmic. A helical membrane pass occupies residues 1160–1180; the sequence is VLLLLPVLLSILGIVCLVVTI. At 1181-1246 the chain is on the lumenal side; sequence MYWSGWEMGA…TLEAVRHVGV (66 aa). The helical transmembrane segment at 1247–1267 threads the bilayer; that stretch reads AIVSSALTTVIATVPLFFCII. The Cytoplasmic portion of the chain corresponds to 1268–1281; that stretch reads APFAKFGKIVALNT. Residues 1282 to 1302 form a helical membrane-spanning segment; sequence GVSILYTLTVSTALLGIMAPG. The Lumenal portion of the chain corresponds to 1303 to 1310; it reads SFTRTRTS. Residues 1311–1331 traverse the membrane as a helical segment; the sequence is FLKALGAVLLAGALGLGACLV. At 1332–1347 the chain is on the cytoplasmic side; sequence LLRSGYKIPLPSGATL.

This sequence belongs to the patched family. In terms of tissue distribution, expressed in brain, retina, testis and thymus.

Its subcellular location is the endoplasmic reticulum membrane. The protein localises to the nucleus membrane. It localises to the cytoplasmic vesicle membrane. Its function is as follows. Plays a role in neuronal proliferation and differentiation. Plays a role in the accumulation of cellular cholesterol. Involved in intracellular lipid droplet formation. May contribute to cholesterol homeostasis in neuronal cells. This is Protein dispatched homolog 3 from Mus musculus (Mouse).